A 369-amino-acid chain; its full sequence is Anhydro-N-acetylmuramic acid kinase (369 aa).

12–19 (GTSLDGVD) contributes to the ATP binding site.

The protein belongs to the anhydro-N-acetylmuramic acid kinase family.

The enzyme catalyses 1,6-anhydro-N-acetyl-beta-muramate + ATP + H2O = N-acetyl-D-muramate 6-phosphate + ADP + H(+). It functions in the pathway amino-sugar metabolism; 1,6-anhydro-N-acetylmuramate degradation. It participates in cell wall biogenesis; peptidoglycan recycling. Its function is as follows. Catalyzes the specific phosphorylation of 1,6-anhydro-N-acetylmuramic acid (anhMurNAc) with the simultaneous cleavage of the 1,6-anhydro ring, generating MurNAc-6-P. Is required for the utilization of anhMurNAc either imported from the medium or derived from its own cell wall murein, and thus plays a role in cell wall recycling. The protein is Anhydro-N-acetylmuramic acid kinase of Actinobacillus pleuropneumoniae serotype 3 (strain JL03).